Consider the following 502-residue polypeptide: MTIKAEEISALLKERIASYGSEIEVSETGTVIQVGDGIARAHGLDNVMAGELVEFSNGVMGLAQNLEEGNVGIIILGDYKGIKEGDSVKRTGRIMEVPVGEALLGRVVNPLGQPIDGLGPIVTDTYNPIERKAYGVMARKSVHEPLQTGIKAIDALVPIGRGQRELIIGDRQTGKTSVAIDTIINQKEENMICIYVAIGQKESTVRGVVETLRQNGALDYTIVVSASASQPAPLLYLAPFAGVSMGEYFMDRGQHVLVVYDDLSKQAAAYRELSLLLRRPPGREAYPGDVFYLHSRLLERAAKLNDELGGGSLTALPFIETQASDISAYIPTNVISITDGQIFLQSDLFFSGVRPAINAGLSVSRVGGSAQVKAMKKVAGTLRLDLASYRELEAFAQFGSDLDKATQSKLNRGQRTVEVLKQDLNAPLSVDKQVIIIYALTKGHLDDIPVTDIRRFETEMNAWLDQNRKDLCREIRQTGNLPSDEAMVDAITEFKKTFSPSV.

169–176 (GDRQTGKT) lines the ATP pocket.

The protein belongs to the ATPase alpha/beta chains family. As to quaternary structure, F-type ATPases have 2 components, CF(1) - the catalytic core - and CF(0) - the membrane proton channel. CF(1) has five subunits: alpha(3), beta(3), gamma(1), delta(1), epsilon(1). CF(0) has three main subunits: a(1), b(2) and c(9-12). The alpha and beta chains form an alternating ring which encloses part of the gamma chain. CF(1) is attached to CF(0) by a central stalk formed by the gamma and epsilon chains, while a peripheral stalk is formed by the delta and b chains.

It localises to the cell membrane. It carries out the reaction ATP + H2O + 4 H(+)(in) = ADP + phosphate + 5 H(+)(out). Functionally, produces ATP from ADP in the presence of a proton gradient across the membrane. The alpha chain is a regulatory subunit. The sequence is that of ATP synthase subunit alpha from Exiguobacterium sp. (strain ATCC BAA-1283 / AT1b).